Reading from the N-terminus, the 566-residue chain is MQARRLAKRPSLGSRRGGAAPAPAPEAAALGLPPPGPSPAAAPGSWRPPLPPPRGTGPSRAAAASSPVLLLLGEEDEDEEGAGRRRRTRGRVTEKPRGVAEEEDDDEEEDEEVVVEVVDGDEDDEDAEERFVPLGPGRALPKGPARGAVKVGSFKREMTFTFQSEDFRRDSSKKPSHHLFPLAMEEDVRTADTKKTSRVLDQEKETRSVCLLEQKRKVVSSNIDVPPARKSSEELDMDKVTAAMVLTSLSTSPLVRSPPVRPNEGLSGSWKEGAPSSSSSSGYWSWSAPSDQSNPSTPSPPLSADSFKPFRSPAPPDDGIDEADASNLLFDEPIPRKRKNSMKVMFKCLWKSCGKVLNTAAGIQKHIRAVHLGRVGESDCSDGEEDFYYTEIKLNTDATAEGLNTVAPVSPSQSLASAPAFPIPDSSRTETPCAKTDTKLVTPLSRSAPTTLYLVHTDHAYQATPPVTIPGSAKFTPNGSSFSISWQSPPVTFTGVPVSPPHHPTAGSGEQRQHAHTALSSPPRGTVTLRKPRGEGKKCRKVYGMENRDMWCTACRWKKACQRFID.

Disordered stretches follow at residues 1-148 (MQAR…ARGA), 166-203 (DFRRDSSKKPSHHLFPLAMEEDVRTADTKKTSRVLDQE), and 253-324 (PLVR…DEAD). Residues 12-31 (LGSRRGGAAPAPAPEAAALG) are compositionally biased toward low complexity. Residues 32–55 (LPPPGPSPAAAPGSWRPPLPPPRG) are compositionally biased toward pro residues. A compositionally biased stretch (low complexity) spans 56–72 (TGPSRAAAASSPVLLLL). Over residues 91–100 (RVTEKPRGVA) the composition is skewed to basic and acidic residues. The span at 101 to 128 (EEEDDDEEEDEEVVVEVVDGDEDDEDAE) shows a compositional bias: acidic residues. The span at 186-203 (EDVRTADTKKTSRVLDQE) shows a compositional bias: basic and acidic residues. Residues 267–290 (SGSWKEGAPSSSSSSGYWSWSAPS) show a composition bias toward low complexity. The C2H2-type zinc-finger motif lies at 346–371 (FKCLWKSCGKVLNTAAGIQKHIRAVH). Residues Ser378 and Ser381 each carry the phosphoserine modification. Disordered regions lie at residues 409–436 (VSPSQSLASAPAFPIPDSSRTETPCAKT) and 497–535 (PVSPPHHPTAGSGEQRQHAHTALSSPPRGTVTLRKPRGE). The tract at residues 471–566 (GSAKFTPNGS…WKKACQRFID (96 aa)) is sufficient for binding to RE2 sequence motifs. The CR1 motif lies at 537 to 541 (KKCRK). Positions 555 to 559 (CRWKK) match the CR2 motif.

The protein localises to the nucleus. Transcription factor which binds to RE2 sequence elements in the MYOD1 enhancer. This is Zinc finger protein 704 from Mus musculus (Mouse).